The following is a 652-amino-acid chain: RNA-binding E3 ubiquitin-protein ligase MEX3C (652 aa).

2 disordered regions span residues 15–39 and 80–136; these read AAPA…ELEG and QARR…EDRP. The segment covering 18 to 33 has biased composition (pro residues); the sequence is APLPQPPPLPPPPPAG. The span at 101–134 shows a compositional bias: acidic residues; sequence AELELEVDEEEGEEAELDGELLEEEELEEAEEED. 2 KH domains span residues 225-286 and 319-380; these read TTEC…KREI and QTTV…REEI. Disordered stretches follow at residues 429–448 and 506–566; these read ARMM…SGST and FEPV…HVGL. The segment covering 430–448 has biased composition (low complexity); sequence RMMSNYRNDSSSSLGSGST. Over residues 519–537 the composition is skewed to polar residues; that stretch reads PSGNMKTQRRGSQPSTPRL. Phosphoserine is present on residues serine 530 and serine 538. The segment covering 544–555 has biased composition (basic and acidic residues); sequence SIEHPLARRVRS. The RING-type zinc finger occupies 601–641; sequence CVICFENEVIAALVPCGHNLFCMECANKICEKRTPSCPVCQ.

In terms of assembly, interacts with USP7, which antagonizes the ability to degrade mRNA. Phosphorylated.

The protein resides in the nucleus. Its subcellular location is the cytoplasm. It catalyses the reaction S-ubiquitinyl-[E2 ubiquitin-conjugating enzyme]-L-cysteine + [acceptor protein]-L-lysine = [E2 ubiquitin-conjugating enzyme]-L-cysteine + N(6)-ubiquitinyl-[acceptor protein]-L-lysine.. Functionally, RNA-binding protein. May be involved in post-transcriptional regulatory mechanisms, modulating levels of some mRNAs by promoting their degradation in a way involving ubiquitin ligase activity. May act as suppressor of replication stress and chromosome missegregation. This Mus musculus (Mouse) protein is RNA-binding E3 ubiquitin-protein ligase MEX3C (Mex3c).